Here is a 688-residue protein sequence, read N- to C-terminus: Translation initiation factor IF-2 (688 aa).

The segment covering 50–62 (LLSGKEKSEKTKE) has biased composition (basic and acidic residues). Residues 50–95 (LLSGKEKSEKTKEEDDEIETTAKNPIKESINNKKSNKRDDKNEKVN) are disordered. The segment covering 72–82 (KNPIKESINNK) has biased composition (low complexity). Positions 86 to 95 (KRDDKNEKVN) are enriched in basic and acidic residues. In terms of domain architecture, tr-type G spans 187–354 (KRSPIITVMG…MILLSSEILE (168 aa)). A G1 region spans residues 196 to 203 (GHVDHGKT). Residue 196 to 203 (GHVDHGKT) participates in GTP binding. A G2 region spans residues 221 to 225 (GITQH). Residues 242-245 (DTPG) are G3. GTP-binding positions include 242–246 (DTPGH) and 296–299 (NKID). Residues 296-299 (NKID) form a G4 region. Residues 332 to 334 (SAH) form a G5 region.

Belongs to the TRAFAC class translation factor GTPase superfamily. Classic translation factor GTPase family. IF-2 subfamily.

It is found in the cytoplasm. Functionally, one of the essential components for the initiation of protein synthesis. Protects formylmethionyl-tRNA from spontaneous hydrolysis and promotes its binding to the 30S ribosomal subunits. Also involved in the hydrolysis of GTP during the formation of the 70S ribosomal complex. The chain is Translation initiation factor IF-2 from Clostridium botulinum (strain Langeland / NCTC 10281 / Type F).